A 466-amino-acid chain; its full sequence is Fez family zinc finger protein 1 (466 aa).

Residues 34–49 (PLAFSIERIMSRTPEP) carry the Engrailed homology 1 repressor motif. 6 C2H2-type zinc fingers span residues 261 to 283 (FTCE…MPVH), 289 to 311 (FVCK…KIIH), 317 to 339 (HKCN…TRIH), 345 to 367 (FVCE…KLTH), 373 to 395 (FKCN…MHTH), and 401 to 424 (FTCP…RKLH). The segment at 446–466 (LPNREQSHTIIQSPQLQKSVY) is disordered. The segment covering 453 to 466 (HTIIQSPQLQKSVY) has biased composition (polar residues).

Belongs to the krueppel C2H2-type zinc-finger protein family.

The protein localises to the nucleus. Functionally, transcription repressor. Involved in the development of the forebrain region. In Xenopus laevis (African clawed frog), this protein is Fez family zinc finger protein 1 (fezf1).